The primary structure comprises 175 residues: UPF0398 protein SPP_0409 (175 aa).

This sequence belongs to the UPF0398 family.

This is UPF0398 protein SPP_0409 from Streptococcus pneumoniae (strain P1031).